The chain runs to 972 residues: 116 kDa U5 small nuclear ribonucleoprotein component (972 aa).

N-acetylmethionine is present on Met-1. Residues 1–54 (MDTDLYDEFGNYIGPELDSDEDDDELGRETKDLDEMDDDDDDDDVGDHDDDHPG) are disordered. 2 stretches are compositionally biased toward acidic residues: residues 17-26 (LDSDEDDDEL) and 34-48 (DEMD…VGDH). Residue Ser-19 is modified to Phosphoserine. Lys-64 participates in a covalent cross-link: Glycyl lysine isopeptide (Lys-Gly) (interchain with G-Cter in SUMO1); alternate. Lys-64 participates in a covalent cross-link: Glycyl lysine isopeptide (Lys-Gly) (interchain with G-Cter in SUMO2); alternate. Phosphothreonine is present on Thr-86. The tr-type G domain maps to 127-409 (ELIRNVTLCG…GIHLTKEELK (283 aa)). GTP contacts are provided by residues 136–143 (GHLHHGKT), 204–208 (DTPGH), and 258–261 (NKID).

It belongs to the TRAFAC class translation factor GTPase superfamily. Classic translation factor GTPase family. EF-G/EF-2 subfamily. As to quaternary structure, component of the U5 snRNP and the U4/U6-U5 tri-snRNP complex, a building block of the spliceosome. The U4/U6-U5 tri-snRNP complex is composed of the U4, U6 and U5 snRNAs and at least PRPF3, PRPF4, PRPF6, PRPF8, PRPF31, SNRNP200, TXNL4A, SNRNP40, DDX23, CD2BP2, PPIH, SNU13, EFTUD2, SART1 and USP39. Component of the pre-catalytic, catalytic and post-catalytic spliceosome complexes. Component of the minor spliceosome, which splices U12-type introns. Within this complex, interacts with CRIPT. Interacts with ERBB4 and PRPF8. Interacts with PIH1D1. Interacts with RPAP3 and URI1 in a ZNHIT2-dependent manner. Interacts with NRDE2. Interacts with FAM50A. Interacts with UBL5.

The protein resides in the nucleus. In terms of biological role, required for pre-mRNA splicing as component of the spliceosome, including pre-catalytic, catalytic and post-catalytic spliceosomal complexes. Component of the U5 snRNP and the U4/U6-U5 tri-snRNP complex, a building block of the spliceosome. As a component of the minor spliceosome, involved in the splicing of U12-type introns in pre-mRNAs. The chain is 116 kDa U5 small nuclear ribonucleoprotein component (EFTUD2) from Homo sapiens (Human).